The following is a 441-amino-acid chain: Tubulin beta chain, nucleomorph (441 aa).

Q11, E69, S138, G142, T143, G144, N204, and N226 together coordinate GTP. Residue E69 coordinates Mg(2+).

The protein belongs to the tubulin family. As to quaternary structure, dimer of alpha and beta chains. A typical microtubule is a hollow water-filled tube with an outer diameter of 25 nm and an inner diameter of 15 nM. Alpha-beta heterodimers associate head-to-tail to form protofilaments running lengthwise along the microtubule wall with the beta-tubulin subunit facing the microtubule plus end conferring a structural polarity. Microtubules usually have 13 protofilaments but different protofilament numbers can be found in some organisms and specialized cells. Mg(2+) serves as cofactor.

Tubulin is the major constituent of microtubules, a cylinder consisting of laterally associated linear protofilaments composed of alpha- and beta-tubulin heterodimers. Microtubules grow by the addition of GTP-tubulin dimers to the microtubule end, where a stabilizing cap forms. Below the cap, tubulin dimers are in GDP-bound state, owing to GTPase activity of alpha-tubulin. The polypeptide is Tubulin beta chain, nucleomorph (tubB) (Guillardia theta (Cryptophyte)).